Here is a 189-residue protein sequence, read N- to C-terminus: UPF0312 protein VC0395_0473/VC395_A0785 (189 aa).

The signal sequence occupies residues 1–22 (MKKTLMAVGLAAVISIPFAANA).

Belongs to the UPF0312 family. Type 1 subfamily.

The protein resides in the periplasm. The sequence is that of UPF0312 protein VC0395_0473/VC395_A0785 from Vibrio cholerae serotype O1 (strain ATCC 39541 / Classical Ogawa 395 / O395).